Here is a 670-residue protein sequence, read N- to C-terminus: Cyclic di-GMP phosphodiesterase PdeA (670 aa).

Residues 428–670 (QNKIFQYILK…GFLWHKPEPI (243 aa)) enclose the EAL domain.

It catalyses the reaction 3',3'-c-di-GMP + H2O = 5'-phosphoguanylyl(3'-&gt;5')guanosine + H(+). Functionally, phosphodiesterase (PDE) that catalyzes the hydrolysis of cyclic diguanylate (c-di-GMP) to pGpG. This chain is Cyclic di-GMP phosphodiesterase PdeA, found in Borreliella burgdorferi (strain ATCC 35210 / DSM 4680 / CIP 102532 / B31) (Borrelia burgdorferi).